Consider the following 447-residue polypeptide: Oxysterols receptor LXR-alpha (447 aa).

Disordered regions lie at residues M1–S37 and A65–P88. Residues M1 to E96 are transactivation AF-1; required for ligand-independent transactivation function. A compositionally biased stretch (low complexity) spans G24–S37. The nuclear receptor DNA-binding region spans N95 to S170. NR C4-type zinc fingers lie at residues C98–C118 and C134–C158. A disordered region spans residues K180–I202. Positions Q205–E447 are transactivation AF-2; required for ligand-dependent transactivation function; mediates interaction with CCAR2. An NR LBD domain is found at E209–E447.

The protein belongs to the nuclear hormone receptor family. NR1 subfamily. Heterodimer of NR1H3 and RXR (retinoic acid receptor). Interacts with CCAR2 (via N-terminus) in a ligand-independent manner. Interacts with SIRT1 and this interaction is inhibited by CCAR2. Interacts with GPS2. Post-translationally, ubiquitinated by UBR5, leading to its degradation: UBR5 specifically recognizes and binds ligand-bound NR1H3 when it is not associated with coactivators (NCOAs). In presence of NCOAs, the UBR5-degron is not accessible, preventing its ubiquitination and degradation. Visceral organs specific expression. Strong expression was found in liver, kidney and intestine followed by spleen and to a lesser extent the adrenals.

It localises to the nucleus. Its subcellular location is the cytoplasm. Functionally, nuclear receptor that exhibits a ligand-dependent transcriptional activation activity. Interaction with retinoic acid receptor (RXR) shifts RXR from its role as a silent DNA-binding partner to an active ligand-binding subunit in mediating retinoid responses through target genes defined by LXRES. LXRES are DR4-type response elements characterized by direct repeats of two similar hexanuclotide half-sites spaced by four nucleotides. Plays an important role in the regulation of cholesterol homeostasis, regulating cholesterol uptake through MYLIP-dependent ubiquitination of LDLR, VLDLR and LRP8. Interplays functionally with RORA for the regulation of genes involved in liver metabolism. Induces LPCAT3-dependent phospholipid remodeling in endoplasmic reticulum (ER) membranes of hepatocytes, driving SREBF1 processing and lipogenesis. Via LPCAT3, triggers the incorporation of arachidonate into phosphatidylcholines of ER membranes, increasing membrane dynamics and enabling triacylglycerols transfer to nascent very low-density lipoprotein (VLDL) particles. Via LPCAT3 also counteracts lipid-induced ER stress response and inflammation, likely by modulating SRC kinase membrane compartmentalization and limiting the synthesis of lipid inflammatory mediators. The sequence is that of Oxysterols receptor LXR-alpha (NR1H3) from Homo sapiens (Human).